The chain runs to 194 residues: Holliday junction branch migration complex subunit RuvA (194 aa).

Positions 1–64 (MIGRLRGILA…EDSVALYGFL (64 aa)) are domain I. The tract at residues 65–140 (REGERRLFRD…RAADFSSGAP (76 aa)) is domain II. The flexible linker stretch occupies residues 140–144 (PITGQ). A domain III region spans residues 145–194 (LGPDAVSEATVALQQLGYKPAEAARMARDAGAEGDEVATVIRKALQAALR).

Belongs to the RuvA family. Homotetramer. Forms an RuvA(8)-RuvB(12)-Holliday junction (HJ) complex. HJ DNA is sandwiched between 2 RuvA tetramers; dsDNA enters through RuvA and exits via RuvB. An RuvB hexamer assembles on each DNA strand where it exits the tetramer. Each RuvB hexamer is contacted by two RuvA subunits (via domain III) on 2 adjacent RuvB subunits; this complex drives branch migration. In the full resolvosome a probable DNA-RuvA(4)-RuvB(12)-RuvC(2) complex forms which resolves the HJ.

It localises to the cytoplasm. In terms of biological role, the RuvA-RuvB-RuvC complex processes Holliday junction (HJ) DNA during genetic recombination and DNA repair, while the RuvA-RuvB complex plays an important role in the rescue of blocked DNA replication forks via replication fork reversal (RFR). RuvA specifically binds to HJ cruciform DNA, conferring on it an open structure. The RuvB hexamer acts as an ATP-dependent pump, pulling dsDNA into and through the RuvAB complex. HJ branch migration allows RuvC to scan DNA until it finds its consensus sequence, where it cleaves and resolves the cruciform DNA. The polypeptide is Holliday junction branch migration complex subunit RuvA (Xanthomonas euvesicatoria pv. vesicatoria (strain 85-10) (Xanthomonas campestris pv. vesicatoria)).